A 547-amino-acid polypeptide reads, in one-letter code: MAAKDVKFGNDARVKMLAGVNILADAVKVTLGPKGRNVVLDKSFGAPTITKDGVSVAREIELEDKFENMGAQMVKEVASKANDAAGDGTTTATVLAQAIVNEGLKAVAAGMNPMDLKRGIDKAVTAVVTELKALSKPCETSKEIEQVGTISANSDSIVGQIIAQAMDKVGKEGVITVEDGTGLEDELAVVEGMQFDRGYLSPYFINKPETATVELDNPFILLVDKKVSNIRELLPVLEGVAKAGKPLLIIAEDVEGEALATLVVNTMRGIVKVAAVKAPGFGDRRKAMLQDIAILTAGTVISEEIGMELEKATLEDLGQAKRVVINKDNTTIIDGIGDEAQIQGRVAQIRQQIEESTSDYDKEKLQERVAKLAGGVAVIKVGAATEVEMKEKKARVEDALHATRAAVEEGIVAGGGVALIRAASKVAGLQGDNEEQNVGIKLALRAMEAPLRQIVANAGEEASIVASAVKNGEGNFGYNAGTEQYGDMIEMGILDPTKVTRSALQFAASVAGLMITTECMVTDLPKEDKADLGAAGMGGMGGMGGMM.

ATP contacts are provided by residues 30–33, Lys51, 87–91, Gly415, and Asp495; these read TLGP and DGTTT.

Belongs to the chaperonin (HSP60) family. Forms a cylinder of 14 subunits composed of two heptameric rings stacked back-to-back. Interacts with the co-chaperonin GroES.

Its subcellular location is the cytoplasm. It catalyses the reaction ATP + H2O + a folded polypeptide = ADP + phosphate + an unfolded polypeptide.. In terms of biological role, together with its co-chaperonin GroES, plays an essential role in assisting protein folding. The GroEL-GroES system forms a nano-cage that allows encapsulation of the non-native substrate proteins and provides a physical environment optimized to promote and accelerate protein folding. This Pasteurella multocida (strain Pm70) protein is Chaperonin GroEL.